The following is a 393-amino-acid chain: Formate-dependent phosphoribosylglycinamide formyltransferase (393 aa).

N(1)-(5-phospho-beta-D-ribosyl)glycinamide contacts are provided by residues 20–21 and glutamate 80; that span reads EL. Residues arginine 112, lysine 153, 158-163, 193-196, and glutamate 201 contribute to the ATP site; these read SSGKGQ and EAFI. An ATP-grasp domain is found at 117–306; the sequence is RLAAEDLNLP…EFELHVRAVL (190 aa). Mg(2+)-binding residues include glutamate 265 and glutamate 277. N(1)-(5-phospho-beta-D-ribosyl)glycinamide contacts are provided by residues aspartate 284, lysine 354, and 361 to 362; that span reads RR.

Belongs to the PurK/PurT family. Homodimer.

The enzyme catalyses N(1)-(5-phospho-beta-D-ribosyl)glycinamide + formate + ATP = N(2)-formyl-N(1)-(5-phospho-beta-D-ribosyl)glycinamide + ADP + phosphate + H(+). It participates in purine metabolism; IMP biosynthesis via de novo pathway; N(2)-formyl-N(1)-(5-phospho-D-ribosyl)glycinamide from N(1)-(5-phospho-D-ribosyl)glycinamide (formate route): step 1/1. Its function is as follows. Involved in the de novo purine biosynthesis. Catalyzes the transfer of formate to 5-phospho-ribosyl-glycinamide (GAR), producing 5-phospho-ribosyl-N-formylglycinamide (FGAR). Formate is provided by PurU via hydrolysis of 10-formyl-tetrahydrofolate. This chain is Formate-dependent phosphoribosylglycinamide formyltransferase, found in Syntrophotalea carbinolica (strain DSM 2380 / NBRC 103641 / GraBd1) (Pelobacter carbinolicus).